Here is a 466-residue protein sequence, read N- to C-terminus: Uronate isomerase (466 aa).

The protein belongs to the metallo-dependent hydrolases superfamily. Uronate isomerase family.

It carries out the reaction D-glucuronate = D-fructuronate. It catalyses the reaction aldehydo-D-galacturonate = keto-D-tagaturonate. It participates in carbohydrate metabolism; pentose and glucuronate interconversion. The polypeptide is Uronate isomerase (Streptococcus pneumoniae (strain 70585)).